The sequence spans 900 residues: MGDSGSRRSTLVSRLPIFRRSINRRHDSLPSSPSSSNTVGVHSSSPSSTNSSSGSTGKRRSIFRTPSISFHHKKGSEPKQEPTNQNLSISNGAQPGHSNMQKLSLEEHIKTRGRHSVGFSSSRNKKITRSLTEDFEREKEHSTNKNVFINCLSSGKSEGDDSGFTEDQTRRSVKQSTRKLLPKSFSSHYKFSKPVLQSQSISLVQQSEFSLEVTQYQEREPVLVRASPSCSVDVTERAGSSLQSPLLSADLTTAQTPSEFLALTEDSVSEMDAFSKSGSMASHCDNFGHNDSTSQMSLNSAAVTKTTTELTGTVPCAIMSPGKYRLEGQCSTESNSLPETSAANQKEVLLQIAELPATSVSHSESNLPADSEREENIGLQNGETMLGTNSPRKLGFYEQHKAIAEHVKGIHPISDSKIIPTSGDHHIFNKTSHGYEANPAKVLASSLSPFREGRFIERRLRSSSEGTAGSSRMILKPKDGNIEEVNSLRKQRAGSSSSKMNSLDVLNNLGSCELDEDDLMLDLEFLEEQSLHPSVCREDSYHSVVSCAAVVLTPMEPMIEMKKREEPEFPEPSKQNLSLKLTKDVDQEARCSHISRMPNSPSADWPLQGVEENGGIDSLPFRLMLQDCTAVKTLLLKMKRVLQESADMSPASSTTSLPVSPLTEEPVPFKDIMKDECSMLKLQLKEKDELISQLQEELGKVRHLQKAFASRVDKSTQTELLCYDGLNLKRLETVQGGREATYRNRIVSQNLSTRDRKAIHTPTEDRFRYSAADQTSPYKNKTCQLPSLCLSNFLKDKELAEVIKHSRGTYETLTSDVTQNLRATVGQSSLKPTAKTEGLSTFLEKPKDQVATARQHSTFTGRFGQPPRGPISLHMYSRKNVFLHHNLHSTELQTLGQQDG.

Disordered stretches follow at residues 1-100 (MGDS…HSNM) and 156-178 (KSEG…QSTR). Residues 29 to 56 (LPSSPSSSNTVGVHSSSPSSTNSSSGST) are compositionally biased toward low complexity. A compositionally biased stretch (polar residues) spans 81-100 (EPTNQNLSISNGAQPGHSNM). The stretch at 673–707 (MKDECSMLKLQLKEKDELISQLQEELGKVRHLQKA) forms a coiled coil.

This sequence belongs to the CCSER family.

This is Serine-rich coiled-coil domain-containing protein 1 (CCSER1) from Homo sapiens (Human).